The primary structure comprises 447 residues: UPF0210 protein LBUL_0934 (447 aa).

This sequence belongs to the UPF0210 family. Homodimer.

The polypeptide is UPF0210 protein LBUL_0934 (Lactobacillus delbrueckii subsp. bulgaricus (strain ATCC BAA-365 / Lb-18)).